A 229-amino-acid chain; its full sequence is Peptidase E (229 aa).

Active-site charge relay system residues include Ser-120, Asp-135, and His-157.

This sequence belongs to the peptidase S51 family.

The protein resides in the cytoplasm. It carries out the reaction Dipeptidase E catalyzes the hydrolysis of dipeptides Asp-|-Xaa. It does not act on peptides with N-terminal Glu, Asn or Gln, nor does it cleave isoaspartyl peptides.. In terms of biological role, hydrolyzes dipeptides containing N-terminal aspartate residues. May play a role in allowing the cell to use peptide aspartate to spare carbon otherwise required for the synthesis of the aspartate family of amino acids. This is Peptidase E from Shigella boydii serotype 18 (strain CDC 3083-94 / BS512).